The sequence spans 147 residues: Globin, major monomeric component (147 aa).

One can recognise a Globin domain in the interval 1-146 (GLSAAQRQVI…ISGALISGLQ (146 aa)). H90 is a heme b binding site.

The protein belongs to the globin family. Monomer.

This chain is Globin, major monomeric component, found in Glycera dibranchiata (Bloodworm).